We begin with the raw amino-acid sequence, 390 residues long: UDP-galactose translocator (390 aa).

The interval 1–24 (MAAVGVGGSTAAAGAGAVSSGALE) is disordered. 10 helical membrane-spanning segments follow: residues 3-23 (AVGV…SGAL), 37-57 (YISL…IRYA), 65-85 (FFAT…CLLL), 97-117 (LVLF…KLAV), 140-160 (TFQV…VLML), 169-189 (WASL…QAGG), 200-220 (GAGL…GVYF), 238-258 (LGLF…GTAV), 269-289 (PAVW…AVVV), and 315-335 (LFGF…IGAV). Over residues 9-22 (STAAAGAGAVSSGA) the composition is skewed to low complexity. The disordered stretch occupies residues 356–390 (PCIHQQPPGQPPPPQLSSRGDLTTEPFLPKSVLVK).

The protein belongs to the nucleotide-sugar transporter family. SLC35A subfamily. Interacts with SLC35A3; the interaction is reduced in the presence of SLC35A4. Found in a complex with SLC35A3 and SLC35A4.

The protein localises to the golgi apparatus membrane. It catalyses the reaction UMP(out) + UDP-alpha-D-galactose(in) = UMP(in) + UDP-alpha-D-galactose(out). It carries out the reaction UDP-N-acetyl-alpha-D-galactosamine(in) + UMP(out) = UDP-N-acetyl-alpha-D-galactosamine(out) + UMP(in). The enzyme catalyses UMP(out) + UDP-alpha-D-glucose(in) = UMP(in) + UDP-alpha-D-glucose(out). The catalysed reaction is UMP(out) + UDP-N-acetyl-alpha-D-glucosamine(in) = UMP(in) + UDP-N-acetyl-alpha-D-glucosamine(out). It catalyses the reaction UDP-alpha-D-galactose(in) + AMP(out) = UDP-alpha-D-galactose(out) + AMP(in). It carries out the reaction UDP-alpha-D-galactose(in) + CMP(out) = UDP-alpha-D-galactose(out) + CMP(in). The enzyme catalyses UDP-N-acetyl-alpha-D-galactosamine(out) + UDP-alpha-D-galactose(in) = UDP-N-acetyl-alpha-D-galactosamine(in) + UDP-alpha-D-galactose(out). The catalysed reaction is UDP-N-acetyl-alpha-D-glucosamine(out) + UDP-alpha-D-galactose(in) = UDP-N-acetyl-alpha-D-glucosamine(in) + UDP-alpha-D-galactose(out). It catalyses the reaction UDP-alpha-D-galactose(in) + UDP-alpha-D-glucose(out) = UDP-alpha-D-galactose(out) + UDP-alpha-D-glucose(in). It carries out the reaction UMP(out) + CMP(in) = UMP(in) + CMP(out). The enzyme catalyses UMP(out) + AMP(in) = UMP(in) + AMP(out). Functionally, transports uridine diphosphate galactose (UDP-galactose) from the cytosol into the Golgi apparatus. It functions as an antiporter that exchanges UDP-galactose for UMP. It is also able to exchange UDP-galactose for AMP and CMP, and to transport UDP-N-acetylgalactosamine (UDP-GalNAc) and other nucleotide sugars. As a provider of UDP-galactose to galactosyltransferases present in the Golgi apparatus, it is necessary for globotriaosylceramide/globoside (Gb3Cer) synthesis from lactosylceramide. This Mus musculus (Mouse) protein is UDP-galactose translocator.